Here is a 126-residue protein sequence, read N- to C-terminus: Large ribosomal subunit protein bL20c (126 aa).

The protein belongs to the bacterial ribosomal protein bL20 family.

The protein resides in the plastid. The protein localises to the chloroplast. Binds directly to 23S ribosomal RNA and is necessary for the in vitro assembly process of the 50S ribosomal subunit. It is not involved in the protein synthesizing functions of that subunit. This is Large ribosomal subunit protein bL20c from Guizotia abyssinica (Niger).